The primary structure comprises 202 residues: CASP-like protein 2B1 (202 aa).

The Cytoplasmic portion of the chain corresponds to 1–29 (MSYLGVGVSPGNVPVYHGTNLKVVDRRVR). Residues 30–50 (LAELVLRCVICGLGILAAVLV) form a helical membrane-spanning segment. Residues 51-72 (GTDTQVKVIFTIQKKAKFTDMK) are Extracellular-facing. The chain crosses the membrane as a helical span at residues 73 to 93 (ALVFLVIANGIAAAYSLIQGL). Topologically, residues 94 to 109 (RCVVSMVRGSVLFSKP) are cytoplasmic. A helical transmembrane segment spans residues 110–130 (LAWAIFSGDQVIAYLTLAAVA). The Extracellular segment spans residues 131 to 164 (AAAQSSVFGEFGQPELQWMKICNMYGKFCNQVGE). The helical transmembrane segment at 165–185 (GIVSAVGVSLSMVILSGISAF) threads the bilayer. Over 186-202 (SLFRLYGGNKGTSGGRW) the chain is Cytoplasmic.

The protein belongs to the Casparian strip membrane proteins (CASP) family. Homodimer and heterodimers.

It is found in the cell membrane. This Vitis vinifera (Grape) protein is CASP-like protein 2B1.